The primary structure comprises 331 residues: Ornithine lipid hydroxylase OlsE (331 aa).

5 helical membrane passes run 13-33 (VSSL…YFAF), 37-57 (MHLL…ALFE), 85-105 (GGVQ…ATVA), 120-140 (WPMA…LYMA), and 189-209 (LLGA…FIGL). The Fatty acid hydroxylase domain occupies 126–260 (VVLGLVIAEF…LVIWDQLLGT (135 aa)).

The protein belongs to the sterol desaturase family.

It is found in the cell inner membrane. It participates in lipid metabolism. Involved in the biosynthesis of ornithine lipids (OLs), which are phosphorus-free membrane lipids. Is responsible for the hydroxylation of OL within the ornithine moiety. The chain is Ornithine lipid hydroxylase OlsE from Rhizobium tropici.